Here is a 376-residue protein sequence, read N- to C-terminus: Chaperone protein DnaJ (376 aa).

One can recognise a J domain in the interval 5-70 (DYYEVLGVGR…DKKAAYDQFG (66 aa)). The CR-type zinc finger occupies 132–210 (GLTKELRIPT…CHGEGRVEKS (79 aa)). Zn(2+) contacts are provided by Cys-145, Cys-148, Cys-162, Cys-165, Cys-184, Cys-187, Cys-198, and Cys-201. CXXCXGXG motif repeat units follow at residues 145–152 (CDLCDGSG), 162–169 (CGTCHGQG), 184–191 (CPTCHGRG), and 198–205 (CGKCHGEG).

The protein belongs to the DnaJ family. As to quaternary structure, homodimer. Zn(2+) serves as cofactor.

The protein resides in the cytoplasm. Its function is as follows. Participates actively in the response to hyperosmotic and heat shock by preventing the aggregation of stress-denatured proteins and by disaggregating proteins, also in an autonomous, DnaK-independent fashion. Unfolded proteins bind initially to DnaJ; upon interaction with the DnaJ-bound protein, DnaK hydrolyzes its bound ATP, resulting in the formation of a stable complex. GrpE releases ADP from DnaK; ATP binding to DnaK triggers the release of the substrate protein, thus completing the reaction cycle. Several rounds of ATP-dependent interactions between DnaJ, DnaK and GrpE are required for fully efficient folding. Also involved, together with DnaK and GrpE, in the DNA replication of plasmids through activation of initiation proteins. This is Chaperone protein DnaJ from Shewanella loihica (strain ATCC BAA-1088 / PV-4).